A 180-amino-acid chain; its full sequence is Cell number regulator 7 (180 aa).

The chain crosses the membrane as a helical span at residues 80 to 102; that stretch reads AAAGAIYTLLACFTGFQCHWIYS.

It belongs to the cornifelin family. As to expression, expressed in roots, leaves, immature ears and silks. Detected preferentially in silks.

The protein resides in the membrane. This Zea mays (Maize) protein is Cell number regulator 7 (CNR7).